The sequence spans 2175 residues: Homeobox protein cut (2175 aa).

2 disordered regions span residues 139–170 (NLLA…QQSG) and 249–432 (GNVK…GQPA). Low complexity-rich tracts occupy residues 153–169 (LLSA…LQQS) and 249–268 (GNVK…SNNS). Residues 265 to 343 (SNNSHQDEEE…ENKDAGEASL (79 aa)) adopt a coiled-coil conformation. Residues 271–294 (DEEELDDEEEDEEEDEDEDDEEEN) are compositionally biased toward acidic residues. The span at 309-320 (QQETRTEPSATT) shows a compositional bias: polar residues. Residues 344–359 (NVSNNHNTTDSNNSCS) are compositionally biased toward low complexity. The span at 360-374 (RKNNNGGNESEQHVA) shows a compositional bias: polar residues. The segment covering 384-415 (NNNTNTSNNNNTSNTATSNTNNNNNNNSSSGN) has biased composition (low complexity). Residues 433 to 499 (VLLAAKDKEI…NEALAEATAL (67 aa)) adopt a coiled-coil conformation. Positions 503–515 (ASTNNNNNSQSSD) are enriched in low complexity. 2 disordered regions span residues 503–600 (ASTN…KIKK) and 656–765 (ASDA…NTNA). The span at 546-568 (AEDDEEDEDQAMLVDSEEAEDKP) shows a compositional bias: acidic residues. The span at 673 to 696 (QQQHQHQQQHHQQQHLHQQHHHHL) shows a compositional bias: basic residues. A compositionally biased stretch (low complexity) spans 697-710 (QQQPNSGSNSNPAS). Over residues 714–735 (HHGHHLHGHGLLHPSSAHHLHH) the composition is skewed to basic residues. The segment covering 738 to 765 (TESNSNSSTPTAAGNNNGSNNSSSNTNA) has biased composition (low complexity). A DNA-binding region (CUT 1) is located at residues 877 to 964 (NMDKYANQAL…VMLLKSLIPK (88 aa)). 2 disordered regions span residues 1001–1083 (LMKQ…HDDQ) and 1197–1289 (QRSS…EFAA). 2 stretches are compositionally biased toward basic and acidic residues: residues 1009–1030 (QHRE…EDSK) and 1062–1083 (QRER…HDDQ). The stretch at 1056–1161 (EQAAAQQRER…QQQAAQAQAQ (106 aa)) forms a coiled coil. The span at 1249-1282 (GAPPTAAPPTGGASSNSAAPSPLSNSILPPALSS) shows a compositional bias: low complexity. The segment at residues 1330-1417 (QQQFDMFNNL…VHKLVASQYK (88 aa)) is a DNA-binding region (CUT 2). Residues 1463–1522 (AQAQHLMQQMQAAAMSAAMQQQQVAQAQQQAQQAQQAQQHLQQQAQQHLQQQQHLAQQQH) are a coiled coil. The segment covering 1507-1540 (AQQHLQQQQHLAQQQHPHQQHHQAAAAAAALHHQ) has biased composition (low complexity). Disordered regions lie at residues 1507–1588 (AQQH…PMLM), 1695–1747 (ERRE…PSKK), 1803–1826 (QVPH…ATPF), 1922–1955 (RSDD…DKTT), 2069–2097 (KQEE…QKLK), and 2113–2175 (SSTG…GWNY). Positions 1564 to 1573 (AQPGGPGGNQ) are enriched in gly residues. The segment at residues 1608-1695 (YEMAALTQDL…VERLQLLKNE (88 aa)) is a DNA-binding region (CUT 3). Residues 1709 to 1732 (NQQDNSSDTSSNDTNDFYTSSPGP) show a composition bias toward low complexity. Residues 1745–1804 (SKKQRVLFSEEQKEALRLAFALDPYPNVGTIEFLANELGLATRTITNWFHNHRMRLKQQV) constitute a DNA-binding region (homeobox). 2 positions are modified to phosphoserine: Ser-1940 and Ser-1944. A compositionally biased stretch (pro residues) spans 2126 to 2135 (PLAPPPPPPA). Low complexity predominate over residues 2136-2175 (ASSSIVSGESTTSSSSSSNTSSSTPAVTTAAATAAAGWNY).

Belongs to the CUT homeobox family. As to expression, detected in many cells in the central nervous system, all external sensory organs, some peripheral neurons, and in the non-neural cells of the spiracles and the Malpighian tubules.

Its subcellular location is the nucleus. Functionally, regulator of cell fate decisions in multiple lineages. Specifically, functions as a determination factor that specifies sensory organ identity in precursor cells. Probably also involved in cell type specification of Malpighian tubules. In absence of cut gene external sensory organs are transformed into chordotonal organs. This is Homeobox protein cut (ct) from Drosophila melanogaster (Fruit fly).